Reading from the N-terminus, the 86-residue chain is Small ribosomal subunit protein bS20 (86 aa).

Positions 1–25 (MTNIKSQQKRNRTNERARLRNKSVK) are disordered.

It belongs to the bacterial ribosomal protein bS20 family.

In terms of biological role, binds directly to 16S ribosomal RNA. This Mycobacterium leprae (strain Br4923) protein is Small ribosomal subunit protein bS20.